The primary structure comprises 608 residues: Protein SHQ1 homolog (608 aa).

Disordered stretches follow at residues 487 to 531 and 543 to 608; these read DAGS…SFYS and IVYE…ASTT. The segment covering 489–498 has biased composition (low complexity); the sequence is GSQGSSPQQQ. Composition is skewed to acidic residues over residues 502–524 and 543–579; these read DDLD…DESV and IVYE…EDDS. A compositionally biased stretch (polar residues) spans 588 to 608; sequence EAEGNSVIEQCSNSETAASTT.

This sequence belongs to the SHQ1 family.

In terms of biological role, required for the quantitative accumulation of H/ACA ribonucleoproteins (RNPs). This chain is Protein SHQ1 homolog, found in Drosophila melanogaster (Fruit fly).